Consider the following 62-residue polypeptide: Large ribosomal subunit protein bL28 (62 aa).

Positions 1–24 (MGKQCFVTGRKASTGNNRSHALNS) are disordered. The span at 11–24 (KASTGNNRSHALNS) shows a compositional bias: polar residues.

The protein belongs to the bacterial ribosomal protein bL28 family.

This Staphylococcus saprophyticus subsp. saprophyticus (strain ATCC 15305 / DSM 20229 / NCIMB 8711 / NCTC 7292 / S-41) protein is Large ribosomal subunit protein bL28.